The chain runs to 125 residues: MLSRLLKEHQGKQTERKEAQEKRRKDAIAAATTLTEALVDHLNVGVAQAYVNQRKLDHEVKTLQTQAAQFAKQTTQWISLVENFNQALKEIGDVENWARSIEKDMRIIATALEYVYKGQLQPSAS.

Residues 1-24 form a disordered region; that stretch reads MLSRLLKEHQGKQTERKEAQEKRR. Positions 1 to 25 form a coiled coil; that stretch reads MLSRLLKEHQGKQTERKEAQEKRRK.

It belongs to the BLOC1S1 family. In terms of assembly, component of the biogenesis of lysosome-related organelles complex 1 (BLOC-1).

It is found in the mitochondrion intermembrane space. It localises to the mitochondrion matrix. The protein resides in the cytoplasm. Its subcellular location is the cytosol. The protein localises to the lysosome membrane. It carries out the reaction L-lysyl-[protein] + acetyl-CoA = N(6)-acetyl-L-lysyl-[protein] + CoA + H(+). Functionally, component of the BLOC-1 complex, a complex that is required for normal biogenesis of lysosome-related organelles (LRO), such as platelet dense granules and melanosomes. May also play a role in intracellular vesicle trafficking. As part of a BORC-like complex may play a role in lysosomes movement and localization at the cell periphery. Associated with the cytosolic face of lysosomes, this complex may couple lysosomes to microtubule plus-end-directed kinesin motor. In terms of biological role, acts as a protein acetyltransferase. May negatively regulate aerobic respiration through mitochondrial protein lysine-acetylation. The sequence is that of Biogenesis of lysosome-related organelles complex 1 subunit 1 (bloc1s1) from Xenopus tropicalis (Western clawed frog).